A 197-amino-acid polypeptide reads, in one-letter code: Imidazoleglycerol-phosphate dehydratase (197 aa).

The protein belongs to the imidazoleglycerol-phosphate dehydratase family.

It is found in the cytoplasm. The enzyme catalyses D-erythro-1-(imidazol-4-yl)glycerol 3-phosphate = 3-(imidazol-4-yl)-2-oxopropyl phosphate + H2O. It functions in the pathway amino-acid biosynthesis; L-histidine biosynthesis; L-histidine from 5-phospho-alpha-D-ribose 1-diphosphate: step 6/9. The chain is Imidazoleglycerol-phosphate dehydratase from Teredinibacter turnerae (strain ATCC 39867 / T7901).